The chain runs to 165 residues: Cyclic pyranopterin monophosphate synthase (165 aa).

Substrate contacts are provided by residues 79–81 (LCH) and 117–118 (ME). Residue Asp-132 is part of the active site.

This sequence belongs to the MoaC family. Homohexamer; trimer of dimers.

The enzyme catalyses (8S)-3',8-cyclo-7,8-dihydroguanosine 5'-triphosphate = cyclic pyranopterin phosphate + diphosphate. Its pathway is cofactor biosynthesis; molybdopterin biosynthesis. In terms of biological role, catalyzes the conversion of (8S)-3',8-cyclo-7,8-dihydroguanosine 5'-triphosphate to cyclic pyranopterin monophosphate (cPMP). The polypeptide is Cyclic pyranopterin monophosphate synthase (Chloroflexus aggregans (strain MD-66 / DSM 9485)).